The primary structure comprises 137 residues: Photosystem II reaction center W protein, chloroplastic (137 aa).

The transit peptide at 1-64 (MATITASSSA…ETTTTTNKSM (64 aa)) directs the protein to the chloroplast. The transit peptide at 65 to 83 (GASLLAAAAAATISNPAMA) directs the protein to the thylakoid. The Lumenal, thylakoid segment spans residues 84–103 (LVDERMSTEGTGLPFGLSNN). A helical transmembrane segment spans residues 104–123 (LLGWILFGVFGLIWALYFVY). Topologically, residues 124–137 (ASGLEEDEESGLSL) are stromal.

As to quaternary structure, part of the photosystem II complex. PSII is composed of 1 copy each of membrane proteins PsbA, PsbB, PsbC, PsbD, numerous small proteins, at least 3 peripheral proteins of the oxygen-evolving complex and a large number of cofactors. It forms dimeric complexes.

The protein resides in the plastid. It localises to the chloroplast thylakoid membrane. Stabilizes dimeric photosystem II (PSII). In its absence no dimeric PSII accumulates and there is a reduction of monomeric PSII. The polypeptide is Photosystem II reaction center W protein, chloroplastic (Spinacia oleracea (Spinach)).